Consider the following 291-residue polypeptide: 4-hydroxy-tetrahydrodipicolinate synthase (291 aa).

T45 contacts pyruvate. The active-site Proton donor/acceptor is the Y133. K161 serves as the catalytic Schiff-base intermediate with substrate. I203 provides a ligand contact to pyruvate.

The protein belongs to the DapA family. Homotetramer.

The protein resides in the cytoplasm. The enzyme catalyses L-aspartate 4-semialdehyde + pyruvate = (2S,4S)-4-hydroxy-2,3,4,5-tetrahydrodipicolinate + H2O + H(+). Its pathway is amino-acid biosynthesis; L-lysine biosynthesis via DAP pathway; (S)-tetrahydrodipicolinate from L-aspartate: step 3/4. With respect to regulation, is allosterically feedback inhibited by lysine; the N.meningitidis enzyme is significantly more sensitive to lysine than the E.coli enzyme. Shows substrate inhibition by (S)-ASA, with a Ki of 1.7 mM. Its function is as follows. Catalyzes the condensation of (S)-aspartate-beta-semialdehyde [(S)-ASA] and pyruvate to 4-hydroxy-tetrahydrodipicolinate (HTPA). The sequence is that of 4-hydroxy-tetrahydrodipicolinate synthase from Neisseria meningitidis serogroup B (strain ATCC BAA-335 / MC58).